The sequence spans 866 residues: Transcription factor E2F8 (866 aa).

Residues Ser-71 and Ser-102 each carry the phosphoserine modification. 2 consecutive DNA-binding regions follow at residues 113-182 (RKEK…TWHG) and 261-347 (RKDK…KWTG). Disordered stretches follow at residues 409–429 (RKIN…STQN), 532–632 (TITP…STTL), and 794–837 (TNGQ…GSPC). 2 positions are modified to phosphoserine: Ser-413 and Ser-417. A compositionally biased stretch (polar residues) spans 543–552 (VCPTTSSNAM). Basic and acidic residues-rich tracts occupy residues 588 to 603 (QGAK…EKGS) and 612 to 624 (SGSK…DQKA). Polar residues predominate over residues 794 to 805 (TNGQSFAGTGAQ). Residues 825–834 (TPGGPTKPTG) are compositionally biased toward low complexity.

It belongs to the E2F/DP family. In terms of assembly, homodimer and heterodimer: mainly forms homodimers and, to a lesser extent, heterodimers with E2F8. Dimerization is important for DNA-binding. Interacts with HIF1A.

It is found in the nucleus. Atypical E2F transcription factor that participates in various processes such as angiogenesis and polyploidization of specialized cells. Mainly acts as a transcription repressor that binds DNA independently of DP proteins and specifically recognizes the E2 recognition site 5'-TTTC[CG]CGC-3'. Directly represses transcription of classical E2F transcription factors such as E2F1: component of a feedback loop in S phase by repressing the expression of E2F1, thereby preventing p53/TP53-dependent apoptosis. Plays a key role in polyploidization of cells in placenta and liver by regulating the endocycle, probably by repressing genes promoting cytokinesis and antagonizing action of classical E2F proteins (E2F1, E2F2 and/or E2F3). Required for placental development by promoting polyploidization of trophoblast giant cells. Acts as a promoter of sprouting angiogenesis, possibly by acting as a transcription activator: associates with HIF1A, recognizes and binds the VEGFA promoter, which is different from canonical E2 recognition site, and activates expression of the VEGFA gene. The sequence is that of Transcription factor E2F8 (E2F8) from Bos taurus (Bovine).